The sequence spans 212 residues: Putative DNA-binding protein At1g48610 (212 aa).

The disordered stretch occupies residues 1–130 (MAKTALTPPA…GRPKKDDVAA (130 aa)). Polar residues predominate over residues 27-44 (NKPQTDATGVSATDTASQ). DNA-binding regions (a.T hook) lie at residues 45 to 56 (KRGRGRPPKAKS), 70 to 79 (TKPSGRPKRN), and 94 to 98 (KKRGR). The span at 57–72 (DSSQIGAVSAKASTKP) shows a compositional bias: polar residues. Residues 103-113 (TVTAAVVTTAT) are compositionally biased toward low complexity. The a.T hook 4 DNA-binding region spans 118-127 (RKRGRPKKDD). Positions 176–210 (DLKKRTALLQKKVKEAAAKLKQAVTAIDEVQKLAD) form a coiled coil.

The protein localises to the nucleus. May bind DNA. The polypeptide is Putative DNA-binding protein At1g48610 (Arabidopsis thaliana (Mouse-ear cress)).